Reading from the N-terminus, the 368-residue chain is Probable endopolygalacturonase A (368 aa).

Residues Met-1–Ala-18 form the signal peptide. A propeptide spanning residues Ala-19–Arg-31 is cleaved from the precursor. Cys-35 and Cys-50 form a disulfide bridge. 7 PbH1 repeats span residues Leu-140–Ala-162, Leu-167–Glu-192, Ser-193–Ser-214, Gly-215–Ser-235, Val-244–Thr-265, Val-273–Gln-295, and Thr-307–Gly-352. The Proton donor role is filled by Asp-207. Cys-209 and Cys-225 are joined by a disulfide. His-229 is an active-site residue. Residue Asn-246 is glycosylated (N-linked (GlcNAc...) asparagine). 2 disulfide bridges follow: Cys-335/Cys-340 and Cys-359/Cys-368.

It belongs to the glycosyl hydrolase 28 family.

The protein resides in the secreted. The catalysed reaction is (1,4-alpha-D-galacturonosyl)n+m + H2O = (1,4-alpha-D-galacturonosyl)n + (1,4-alpha-D-galacturonosyl)m.. Functionally, involved in maceration and soft-rotting of plant tissue. Hydrolyzes the 1,4-alpha glycosidic bonds of de-esterified pectate in the smooth region of the plant cell wall. The protein is Probable endopolygalacturonase A (pgaA) of Neosartorya fischeri (strain ATCC 1020 / DSM 3700 / CBS 544.65 / FGSC A1164 / JCM 1740 / NRRL 181 / WB 181) (Aspergillus fischerianus).